The sequence spans 207 residues: NADH-ubiquinone oxidoreductase chain 6 (207 aa).

5 helical membrane-spanning segments follow: residues 15–35, 40–60, 66–86, 116–136, and 184–204; these read ILLDIISILSIISSIAIILVS, SILYLIILFINIAIYLYLIGI, LYILVYIGAIAVLFLFILSLF, LFILIIIIFYYNMINYFNNIY, and ILLIFISFLLLFSILSAIVLT.

The protein belongs to the complex I subunit 6 family.

It localises to the mitochondrion membrane. It carries out the reaction a ubiquinone + NADH + 5 H(+)(in) = a ubiquinol + NAD(+) + 4 H(+)(out). Its function is as follows. Core subunit of the mitochondrial membrane respiratory chain NADH dehydrogenase (Complex I) that is believed to belong to the minimal assembly required for catalysis. Complex I functions in the transfer of electrons from NADH to the respiratory chain. The immediate electron acceptor for the enzyme is believed to be ubiquinone. This is NADH-ubiquinone oxidoreductase chain 6 (ND6) from Wickerhamomyces canadensis (Yeast).